The chain runs to 125 residues: Protein ApaG (125 aa).

In terms of domain architecture, ApaG spans 1–125 (MINSPRVCIQ…FRLAVPTLIH (125 aa)).

The protein is Protein ApaG of Salmonella arizonae (strain ATCC BAA-731 / CDC346-86 / RSK2980).